The chain runs to 211 residues: C-type lectin domain family 2 member L (211 aa).

A disordered region spans residues 1-53; sequence MEPAREPPARARPPPPAARPAPAAPRPRSPAEAEARGPEGLLRRSGSGYEGST. Residues 10 to 28 are compositionally biased toward pro residues; sequence RARPPPPAARPAPAAPRPR. A Phosphoserine modification is found at serine 29. A helical membrane pass occupies residues 66–86; that stretch reads LLLGAIAVLLFAILVVMSILA. 3 cysteine pairs are disulfide-bonded: cysteine 97–cysteine 108, cysteine 125–cysteine 205, and cysteine 184–cysteine 197. Positions 104-206 constitute a C-type lectin domain; that stretch reads YGRKCYYFSE…CLTTRPWVCS (103 aa).

The protein localises to the membrane. The chain is C-type lectin domain family 2 member L (Clec2l) from Rattus norvegicus (Rat).